Consider the following 1512-residue polypeptide: Mitogen-activated protein kinase kinase kinase 1 (1512 aa).

Residues 1-13 are compositionally biased toward low complexity; that stretch reads MAAAAGNRASSSG. Disordered regions lie at residues 1–37, 67–181, and 213–304; these read MAAAAGNRASSSGFPGARATSPEAGGGGGALKASSAP, SVEL…DRPE, and VKPI…PEET. Ala2 is subject to N-acetylalanine. Ser21 and Ser35 each carry phosphoserine. Composition is skewed to low complexity over residues 81-99, 129-142, and 150-160; these read AASPPASSTSPSPEPADAA, AAPDSGASSPAAAE, and AAEPSPAAAPA. Phosphoserine is present on residues Ser137 and Ser154. Basic and acidic residues predominate over residues 162 to 181; the sequence is REMENKETLKGLHKMDDRPE. Positions 250–260 are enriched in low complexity; that stretch reads SPSPGNSPSGR. Ser275 carries the phosphoserine modification. Residue Thr285 is modified to Phosphothreonine. Phosphoserine occurs at positions 292, 297, and 300. The SWIM-type zinc-finger motif lies at 338 to 366; the sequence is YRVFIGPQNCSCARGTFCIHLLFVMLRVF. The span at 416–433 shows a compositional bias: low complexity; the sequence is SNSHTLSSSSTSTSSSEN. The disordered stretch occupies residues 416–436; the sequence is SNSHTLSSSSTSTSSSENSIK. The segment at 443 to 492 adopts an RING-type zinc-finger fold; sequence CPICLLGMLDEESLTVCEDGCRNKLHHHCMSIWAEECRRNREPLICPLCR. Phosphoserine occurs at positions 507 and 531. Disordered regions lie at residues 511–532 and 602–624; these read SPSSLRAAQQQTVQQQPLAGSR and STGNSGGSSGSSPSGGATSGSSQ. Low complexity predominate over residues 611–624; the sequence is GSSPSGGATSGSSQ. Ser923 bears the Phosphoserine mark. The interval 933-972 is disordered; the sequence is SISVGPSSSTTTTTTTTEQPKPMVQTKGRPHSQCLNSSPL. Residues 939–949 are compositionally biased toward low complexity; sequence SSSTTTTTTTT. Ser1018 bears the Phosphoserine mark. Residues 1032-1041 show a composition bias toward basic and acidic residues; the sequence is NCPENKDSDK. The disordered stretch occupies residues 1032-1087; that stretch reads NCPENKDSDKLSPVFTQSRPLPSSNIHRPKPSRPTPGNTSKQGDPSKNSMTLDLNS. Ser1043 is subject to Phosphoserine. Composition is skewed to polar residues over residues 1045–1057 and 1066–1087; these read VFTQSRPLPSSNI and TPGNTSKQGDPSKNSMTLDLNS. The 266-residue stretch at 1243–1508 folds into the Protein kinase domain; sequence WLKGQQIGLG…SRELLKHPVF (266 aa). ATP is bound by residues 1249–1257 and Lys1272; that span reads IGLGAFSSC. The active-site Proton acceptor is Asp1369. Phosphothreonine; by autocatalysis occurs at positions 1400 and 1412.

It belongs to the protein kinase superfamily. STE Ser/Thr protein kinase family. MAP kinase kinase kinase subfamily. As to quaternary structure, binds both upstream activators and downstream substrates in multimolecular complexes through its N-terminus. Oligomerizes after binding MAP2K4 or TRAF2. Interacts with AXIN1. Interacts (via the kinase catalytic domain) with STK38. Interacts with GRIPAP1. The cofactor is Mg(2+). In terms of processing, autophosphorylated.

The enzyme catalyses L-seryl-[protein] + ATP = O-phospho-L-seryl-[protein] + ADP + H(+). The catalysed reaction is L-threonyl-[protein] + ATP = O-phospho-L-threonyl-[protein] + ADP + H(+). It catalyses the reaction S-ubiquitinyl-[E2 ubiquitin-conjugating enzyme]-L-cysteine + [acceptor protein]-L-lysine = [E2 ubiquitin-conjugating enzyme]-L-cysteine + N(6)-ubiquitinyl-[acceptor protein]-L-lysine.. With respect to regulation, activated by autophosphorylation on Thr-1400 and Thr-1412 following oligomerization. In terms of biological role, component of a protein kinase signal transduction cascade. Activates the ERK and JNK kinase pathways by phosphorylation of MAP2K1 and MAP2K4. May phosphorylate the MAPK8/JNK1 kinase. Activates CHUK and IKBKB, the central protein kinases of the NF-kappa-B pathway. The chain is Mitogen-activated protein kinase kinase kinase 1 (MAP3K1) from Homo sapiens (Human).